A 274-amino-acid polypeptide reads, in one-letter code: Undecaprenyl-diphosphatase 1 (274 aa).

The next 7 helical transmembrane spans lie at 47–67, 85–105, 113–133, 150–170, 196–216, 225–245, and 253–273; these read QVFL…LYFN, VSMW…GIPF, FYNY…FIMI, ITYT…VFPG, FFLA…KFGL, ILFI…KFLM, and FKAF…YFLI.

Belongs to the UppP family.

The protein localises to the cell membrane. The enzyme catalyses di-trans,octa-cis-undecaprenyl diphosphate + H2O = di-trans,octa-cis-undecaprenyl phosphate + phosphate + H(+). Catalyzes the dephosphorylation of undecaprenyl diphosphate (UPP). Confers resistance to bacitracin. This chain is Undecaprenyl-diphosphatase 1, found in Clostridium acetobutylicum (strain ATCC 824 / DSM 792 / JCM 1419 / IAM 19013 / LMG 5710 / NBRC 13948 / NRRL B-527 / VKM B-1787 / 2291 / W).